A 555-amino-acid chain; its full sequence is Potassium-transporting ATPase potassium-binding subunit (555 aa).

10 helical membrane-spanning segments follow: residues Ile-2–Ile-22, Gln-60–Phe-80, Ile-130–Phe-150, Val-173–Thr-193, Met-246–Tyr-266, Ile-278–Glu-298, Ala-374–Val-394, Leu-412–Leu-432, Leu-483–Leu-503, and Gly-525–Leu-545.

It belongs to the KdpA family. As to quaternary structure, the system is composed of three essential subunits: KdpA, KdpB and KdpC.

It is found in the cell membrane. Functionally, part of the high-affinity ATP-driven potassium transport (or Kdp) system, which catalyzes the hydrolysis of ATP coupled with the electrogenic transport of potassium into the cytoplasm. This subunit binds the extracellular potassium ions and delivers the ions to the membrane domain of KdpB through an intramembrane tunnel. The protein is Potassium-transporting ATPase potassium-binding subunit of Bacillus cereus (strain G9842).